A 318-amino-acid polypeptide reads, in one-letter code: 2-methyl-6-phytyl-1,4-hydroquinone methyltransferase (318 aa).

The N-terminal stretch at 1–39 (MPEYLLLPAGLISLSLAIAAGLYLLTARGYQSSDSVANA) is a signal peptide. The segment at 97 to 106 (VLDVGCGIGG) is SAM motif I. The SAM motif II stretch occupies residues 157 to 165 (GSFDVVWSV). The segment at 184 to 193 (VVKPGGILVV) is SAM motif III.

This sequence belongs to the class I-like SAM-binding methyltransferase superfamily. gTMT family.

It carries out the reaction 2-methyl-6-phytyl-1,4-benzene-1,4-diol + S-adenosyl-L-methionine = 2,3-dimethyl-6-phytylbenzene-1,4-diol + S-adenosyl-L-homocysteine + H(+). The enzyme catalyses 2-methyl-6-(all-trans-nonaprenyl)benzene-1,4-diol + S-adenosyl-L-methionine = plastoquinol-9 + S-adenosyl-L-homocysteine + H(+). The catalysed reaction is 6-geranylgeranyl-2-methylbenzene-1,4-diol + S-adenosyl-L-methionine = 6-geranylgeranyl-2,3-dimethylbenzene-1,4-diol + S-adenosyl-L-homocysteine + H(+). It participates in cofactor biosynthesis; tocopherol biosynthesis. In terms of biological role, involved in a key methylation step in both tocopherol (vitamin E) and plastoquinone synthesis. Catalyzes the conversion of 2-methyl-6-phytyl-1,4-hydroquinol (MPBQ) to 2,3-dimethyl-6-phytyl-1,4-hydroquinol (DMPQ, a substrate for tocopherol cyclase), and 2-methyl-6-solanyl-1,4-benzoquinol (MSBQ) to plastoquinol. The sequence is that of 2-methyl-6-phytyl-1,4-hydroquinone methyltransferase from Synechocystis sp. (strain ATCC 27184 / PCC 6803 / Kazusa).